A 107-amino-acid chain; its full sequence is Hydrogenase expression/formation protein HoxL (107 aa).

Belongs to the HupF/HypC family.

The chain is Hydrogenase expression/formation protein HoxL (hoxL) from Cupriavidus necator (strain ATCC 17699 / DSM 428 / KCTC 22496 / NCIMB 10442 / H16 / Stanier 337) (Ralstonia eutropha).